The sequence spans 248 residues: Protein PARTING DANCERS homolog (248 aa).

Over residues 1-10 (MERSTHSTGW) the composition is skewed to polar residues. Residues 1–25 (MERSTHSTGWTCLPPPPPEPAAPGR) form a disordered region.

This sequence belongs to the ERCC1/RAD10/SWI10 family. As to quaternary structure, interacts with SHOC1 (via C-terminus). Interacts with HEI10. As to expression, highly expressed in anthers and pistil during meiosis. Expressed in pollen mother cells (PMCs) during meiosis. Expressed at low levels in roots, shoots, leaves, flowers, and glumes.

The protein resides in the chromosome. It is found in the nucleus. It localises to the cytoplasm. Its subcellular location is the cell membrane. In terms of biological role, essential for normal crossover (CO) formation during meiosis. Essential component for the formation of class I meiotic COs. Interacts with SHOC1, another meiotic component, to regulate CO formation, possibly by stabilizing the recombination intermediates during meiosis. PTD and SHOC1 may form transient heterotrimeric or heterotetrameric complexes with HEI10 and/or ZIP4 to promote class I COs formation. Does not seem to be involved in early meiotic recombination steps involving double-strand break (DSB) formation, processing, and single-strand invasion. Does not seem to be involved in homologous pairing or synaptonemal complex (SC) assembly. This Oryza sativa subsp. japonica (Rice) protein is Protein PARTING DANCERS homolog.